The sequence spans 81 residues: Photosystem I iron-sulfur center (81 aa).

2 4Fe-4S ferredoxin-type domains span residues 2 to 31 and 39 to 68; these read SHSVKIYDTCIGCTQCVRACPTDVLEMIPW and IASAPRTEDCVGCKRCESACPTDFLSVRVY. Residues Cys11, Cys14, Cys17, Cys21, Cys48, Cys51, Cys54, and Cys58 each coordinate [4Fe-4S] cluster.

The eukaryotic PSI reaction center is composed of at least 11 subunits. Requires [4Fe-4S] cluster as cofactor.

Its subcellular location is the plastid. The protein resides in the chloroplast thylakoid membrane. It carries out the reaction reduced [plastocyanin] + hnu + oxidized [2Fe-2S]-[ferredoxin] = oxidized [plastocyanin] + reduced [2Fe-2S]-[ferredoxin]. In terms of biological role, apoprotein for the two 4Fe-4S centers FA and FB of photosystem I (PSI); essential for photochemical activity. FB is the terminal electron acceptor of PSI, donating electrons to ferredoxin. The C-terminus interacts with PsaA/B/D and helps assemble the protein into the PSI complex. Required for binding of PsaD and PsaE to PSI. PSI is a plastocyanin-ferredoxin oxidoreductase, converting photonic excitation into a charge separation, which transfers an electron from the donor P700 chlorophyll pair to the spectroscopically characterized acceptors A0, A1, FX, FA and FB in turn. The protein is Photosystem I iron-sulfur center of Arabis hirsuta (Hairy rock-cress).